A 421-amino-acid chain; its full sequence is Proton/sodium-glutamate symport protein (421 aa).

At 1–3 the chain is on the cytoplasmic side; it reads MRK. The helical transmembrane segment at 4 to 24 threads the bilayer; the sequence is IGLAWQIFIGLILGIIVGAIF. Topologically, residues 25 to 43 are extracellular; sequence YGNPKVAAYLQPIGDIFLR. Residues 44 to 64 form a helical membrane-spanning segment; that stretch reads LIKMIVIPIVISSLVVGVASV. Over 65 to 77 the chain is Cytoplasmic; sequence GDLKKLGKLGGKT. Residues 78-98 form a helical membrane-spanning segment; that stretch reads IIYFEIITTIAIVVGLLAANI. Residues 99 to 148 are Extracellular-facing; it reads FQPGAGVNMKSLEKTDIQSYVDTTNEVQHHSMVETFVNIVPKNIFESLST. Residues 149–169 form a helical membrane-spanning segment; the sequence is GDMLPIIFFSVMFGLGVAAIG. Over 170-198 the chain is Cytoplasmic; that stretch reads EKGKPVLQFFQGTAEAMFYVTNQIMKFAP. Residues 199-219 form a helical membrane-spanning segment; the sequence is FGVFALIGVTVSKFGVESLIP. Residues 220–222 lie on the Extracellular side of the membrane; sequence LSK. The chain crosses the membrane as a helical span at residues 223-243; it reads LVIVVYATMLFFIFAVLGGVA. A topological domain (cytoplasmic) is located at residue Lys-244. A helical transmembrane segment spans residues 245–265; it reads LFGINIFHIIKILKDELILAY. The Extracellular segment spans residues 266-306; the sequence is STASSETVLPRIMDKMEKFGCPKAITSFVIPTGYSFNLDGS. Residues 307–327 form a helical membrane-spanning segment; that stretch reads TLYQALAAIFIAQLYGIDMSV. The Cytoplasmic portion of the chain corresponds to 328 to 330; sequence SQQ. Transmembrane regions (helical) follow at residues 331–351 and 352–372; these read ISLL…PGVS and FVVL…LAFI. At 373 to 421 the chain is on the cytoplasmic side; it reads AGIDRILDMARTAVNVIGNSLAAIIMSKWEGQYNEEKGKQYLAELQQSA.

Belongs to the dicarboxylate/amino acid:cation symporter (DAACS) (TC 2.A.23) family. In terms of assembly, homotrimer.

Its subcellular location is the cell membrane. In terms of biological role, this carrier protein is part of the Na(+)-dependent, binding-protein-independent glutamate-aspartate transport system. This chain is Proton/sodium-glutamate symport protein (gltT), found in Bacillus caldotenax.